A 475-amino-acid polypeptide reads, in one-letter code: tRNA-2-methylthio-N(6)-dimethylallyladenosine synthase (475 aa).

In terms of domain architecture, MTTase N-terminal spans 3–120; the sequence is KKLHIKTWGC…LPEMIDQIRA (118 aa). [4Fe-4S] cluster is bound by residues Cys-12, Cys-49, Cys-83, Cys-157, Cys-161, and Cys-164. Residues 143–375 form the Radical SAM core domain; sequence RADGPSAFVS…QDRITQQAMR (233 aa). Residues 378–441 form the TRAM domain; it reads RQMVGTVQRI…TNSLRGVFIR (64 aa).

This sequence belongs to the methylthiotransferase family. MiaB subfamily. In terms of assembly, monomer. The cofactor is [4Fe-4S] cluster.

The protein resides in the cytoplasm. It catalyses the reaction N(6)-dimethylallyladenosine(37) in tRNA + (sulfur carrier)-SH + AH2 + 2 S-adenosyl-L-methionine = 2-methylsulfanyl-N(6)-dimethylallyladenosine(37) in tRNA + (sulfur carrier)-H + 5'-deoxyadenosine + L-methionine + A + S-adenosyl-L-homocysteine + 2 H(+). Its function is as follows. Catalyzes the methylthiolation of N6-(dimethylallyl)adenosine (i(6)A), leading to the formation of 2-methylthio-N6-(dimethylallyl)adenosine (ms(2)i(6)A) at position 37 in tRNAs that read codons beginning with uridine. In Shewanella halifaxensis (strain HAW-EB4), this protein is tRNA-2-methylthio-N(6)-dimethylallyladenosine synthase.